The chain runs to 276 residues: Phosducin-like protein 1 (276 aa).

4 positions are modified to phosphoserine: Ser18, Ser19, Ser20, and Ser42. The disordered stretch occupies residues 18 to 74 (SSSEGEDNGDEGGDNKGASGKSRCSGLTIDTNPDATPAGGFRQQSSTNTGPKGVVKD). One can recognise a Phosducin domain in the interval 62 to 272 (SSTNTGPKGV…LIEHGIIVDR (211 aa)). Residues 153–276 (FGQVQQLTSH…GIIVDRALYN (124 aa)) are thioredoxin fold.

The protein belongs to the phosducin family. In terms of assembly, forms a complex with the beta and gamma subunits of the GTP-binding proteins. Interacts with the CCT chaperonin complex.

Its function is as follows. Functions as a co-chaperone for CCT in the assembly of heterotrimeric G protein complexes, facilitates the assembly of both Gbeta-Ggamma and RGS-Gbeta5 heterodimers. The chain is Phosducin-like protein 1 from Drosophila melanogaster (Fruit fly).